The following is a 288-amino-acid chain: Protease HtpX homolog (288 aa).

Transmembrane regions (helical) follow at residues 1–21 (MHTI…LLAG) and 23–43 (IIGG…MNFF). A Zn(2+)-binding site is contributed by His130. Glu131 is an active-site residue. A Zn(2+)-binding site is contributed by His134. Transmembrane regions (helical) follow at residues 140 to 160 (ILIS…AEMA) and 175 to 195 (IGGL…AMII). Position 204 (Glu204) interacts with Zn(2+).

The protein belongs to the peptidase M48B family. Zn(2+) is required as a cofactor.

The protein resides in the cell inner membrane. The protein is Protease HtpX homolog of Persephonella marina (strain DSM 14350 / EX-H1).